The following is a 248-amino-acid chain: tRNA pseudouridine synthase A (248 aa).

The active-site Nucleophile is D53. Residue Y111 coordinates substrate.

The protein belongs to the tRNA pseudouridine synthase TruA family. Homodimer.

It catalyses the reaction uridine(38/39/40) in tRNA = pseudouridine(38/39/40) in tRNA. Formation of pseudouridine at positions 38, 39 and 40 in the anticodon stem and loop of transfer RNAs. This chain is tRNA pseudouridine synthase A, found in Listeria monocytogenes serovar 1/2a (strain ATCC BAA-679 / EGD-e).